The sequence spans 290 residues: Glutaredoxin domain-containing cysteine-rich protein 1 (290 aa).

The Glutaredoxin domain occupies 127-234; that stretch reads LQQPSTDLEF…DILTKIERVQ (108 aa).

This sequence belongs to the GRXCR1 family. In terms of tissue distribution, expressed at low levels in adult lung, brain and duodenum with moderate levels in testis. Highly expressed in fetal cochlea.

Its subcellular location is the cell projection. It localises to the stereocilium. The protein resides in the microvillus. It is found in the kinocilium. May play a role in actin filament architecture in developing stereocilia of sensory cells. In Homo sapiens (Human), this protein is Glutaredoxin domain-containing cysteine-rich protein 1 (GRXCR1).